Reading from the N-terminus, the 110-residue chain is Circadian clock oscillator protein KaiB (110 aa).

It belongs to the KaiB family. In terms of assembly, the KaiABC complex composition changes during the circadian cycle to control KaiC phosphorylation. Complexes KaiC(6), KaiA(2-4):KaiC(6), KaiB(6):KaiC(6) and KaiC(6):KaiB(6):KaiA(12) are among the most important forms, many form cooperatively. Undergoes a major conformational rearrangment; in the free state forms homotetramers as a dimer of dimers. When bound to the CI domain of KaiC switches to a monomeric thioredoxin-fold (KaiB(fs)). KaiB(fs) binds CikA, leading it to dephosphorylate phospho-RpaA.

In terms of biological role, key component of the KaiABC oscillator complex, which constitutes the main circadian regulator in cyanobacteria. Complex composition changes during the circadian cycle to control KaiC phosphorylation. KaiA stimulates KaiC autophosphorylation, while KaiB sequesters KaiA, leading to KaiC autodephosphorylation. Phospho-Ser-431 KaiC accumulation triggers binding of KaiB to form the KaiB(6):KaiC(6) complex, leading to changes in output regulators CikA and SasA. KaiB switches to a thioredoxin-like fold (KaiB(fs)) when bound to KaiC. KaiB(6):KaiC(6) formation exposes a site for KaiA binding that sequesters KaiA from KaiC, making the KaiC(6):KaiB(6):KaiA(12) complex that results in KaiC autodephosphorylation. A metamorphic protein which reversibly switches between an inactive tetrameric fold and a rare, thioredoxin-like monomeric fold (KaiB(fs)). KaiB(fs) binds phospho-KaiC, KaiA and CikA. KaiA and CikA compete for binding to KaiB(fs), and KaiB(fs) and SasA compete for binding to KaiC, thus the clock oscillator and output signal pathway are tightly coupled. This is Circadian clock oscillator protein KaiB from Synechococcus sp. (strain RCC307).